We begin with the raw amino-acid sequence, 310 residues long: Homoserine O-acetyltransferase (310 aa).

Catalysis depends on Cys-142, which acts as the Acyl-thioester intermediate. Residues Lys-163 and Ser-192 each coordinate substrate. Catalysis depends on His-235, which acts as the Proton acceptor. Residue Glu-237 is part of the active site. Substrate is bound at residue Arg-249.

Belongs to the MetA family.

The protein resides in the cytoplasm. The catalysed reaction is L-homoserine + acetyl-CoA = O-acetyl-L-homoserine + CoA. It participates in amino-acid biosynthesis; L-methionine biosynthesis via de novo pathway; O-acetyl-L-homoserine from L-homoserine: step 1/1. Its function is as follows. Transfers an acetyl group from acetyl-CoA to L-homoserine, forming acetyl-L-homoserine. This chain is Homoserine O-acetyltransferase, found in Lachnospira eligens (strain ATCC 27750 / DSM 3376 / VPI C15-48 / C15-B4) (Eubacterium eligens).